Reading from the N-terminus, the 506-residue chain is Anaerobic nitric oxide reductase transcription regulator NorR (506 aa).

D57 bears the 4-aspartylphosphate mark. The 230-residue stretch at 187 to 416 (MIGLSPAMTQ…LEHAIHRAVV (230 aa)) folds into the Sigma-54 factor interaction domain. Residues 215–222 (GETGTGKE) and 278–287 (ADNGTLFLDE) each bind ATP. Residues 481-500 (WAASARALETDVANLHRLAK) constitute a DNA-binding region (H-T-H motif).

The protein operates within nitrogen metabolism; nitric oxide reduction. Its function is as follows. Required for the expression of anaerobic nitric oxide (NO) reductase, acts as a transcriptional activator for at least the norVW operon. Activation also requires sigma-54. This Salmonella schwarzengrund (strain CVM19633) protein is Anaerobic nitric oxide reductase transcription regulator NorR.